Reading from the N-terminus, the 144-residue chain is Bacilliredoxin BCE_2233 (144 aa).

Belongs to the bacilliredoxin family.

In Bacillus cereus (strain ATCC 10987 / NRS 248), this protein is Bacilliredoxin BCE_2233.